Consider the following 352-residue polypeptide: Nuclear receptor subfamily 1 group I member 3 (352 aa).

The segment at residues 8–83 (LRNCVVCGDQ…AGMRKDMILS (76 aa)) is a DNA-binding region (nuclear receptor). The NR C4-type zinc-finger motif lies at 11–31 (CVVCGDQATGYHFNALTCEGC). Position 38 is a phosphothreonine; by PKC (threonine 38). The NR C4-type zinc-finger motif lies at 47-71 (CPFAGSCEVSKTQRRHCPACRLQKC). The 244-residue stretch at 109 to 352 (EQEELIRTLL…MMPLLQEICS (244 aa)) folds into the NR LBD domain.

This sequence belongs to the nuclear hormone receptor family. NR1 subfamily. Interacts with ECT2. Heterodimer of NR1I3 and RXR. Interacts with PSMC4. Directly interacts with DNAJC7. The DNAJC7-NR1I3 complex may also include HSP90. Interacts with CRY1. Interacts with CRY2 in a ligand-dependent manner. Phosphorylated at Thr-38 by PKC, dephosphorylation of Thr-38 is required for nuclear translocation and activation. Predominantly expressed in liver.

It localises to the nucleus. It is found in the cytoplasm. The protein localises to the cytoskeleton. Binds and transactivates the retinoic acid response elements that control expression of the retinoic acid receptor beta 2 and alcohol dehydrogenase 3 genes. Transactivates both the phenobarbital responsive element module of the human CYP2B6 gene and the CYP3A4 xenobiotic response element. The polypeptide is Nuclear receptor subfamily 1 group I member 3 (NR1I3) (Homo sapiens (Human)).